Consider the following 1286-residue polypeptide: DNA-directed RNA polymerase subunit beta' (1286 aa).

Zn(2+)-binding residues include Cys-66, Cys-68, Cys-81, and Cys-84. The Mg(2+) site is built by Asp-527, Asp-529, and Asp-531. Residues Cys-905, Cys-981, Cys-988, and Cys-991 each contribute to the Zn(2+) site.

The protein belongs to the RNA polymerase beta' chain family. The RNAP catalytic core consists of 2 alpha, 1 beta, 1 beta' and 1 omega subunit. When a sigma factor is associated with the core the holoenzyme is formed, which can initiate transcription. The cofactor is Mg(2+). Zn(2+) serves as cofactor.

It catalyses the reaction RNA(n) + a ribonucleoside 5'-triphosphate = RNA(n+1) + diphosphate. DNA-dependent RNA polymerase catalyzes the transcription of DNA into RNA using the four ribonucleoside triphosphates as substrates. This Mycoplasmoides gallisepticum (strain R(low / passage 15 / clone 2)) (Mycoplasma gallisepticum) protein is DNA-directed RNA polymerase subunit beta'.